Reading from the N-terminus, the 384-residue chain is Ubiquitin-like modifier-activating enzyme 5 (384 aa).

The ATP site is built by Gly-63, Asp-84, Lys-107, Asn-130, and Asn-164. 2 residues coordinate Zn(2+): Cys-206 and Cys-209. Cys-230 serves as the catalytic Glycyl thioester intermediate. Zn(2+) contacts are provided by Cys-283 and Cys-288. Positions 352–375 are disordered; it reads EAPEKSSAEATQAATAPVDDTSLE.

This sequence belongs to the ubiquitin-activating E1 family. UBA5 subfamily.

Its function is as follows. E1-like enzyme which activates UFM1. This chain is Ubiquitin-like modifier-activating enzyme 5, found in Drosophila persimilis (Fruit fly).